Consider the following 276-residue polypeptide: Dermonecrotic toxin LvSicTox-alphaII1 (276 aa).

The active site involves His-5. Mg(2+) contacts are provided by Glu-25 and Asp-27. His-41 functions as the Nucleophile in the catalytic mechanism. 2 cysteine pairs are disulfide-bonded: Cys-45-Cys-51 and Cys-47-Cys-193. Asp-85 serves as a coordination point for Mg(2+).

Belongs to the arthropod phospholipase D family. Class II subfamily. The cofactor is Mg(2+). In terms of tissue distribution, expressed by the venom gland.

The protein localises to the secreted. It carries out the reaction an N-(acyl)-sphingosylphosphocholine = an N-(acyl)-sphingosyl-1,3-cyclic phosphate + choline. The catalysed reaction is an N-(acyl)-sphingosylphosphoethanolamine = an N-(acyl)-sphingosyl-1,3-cyclic phosphate + ethanolamine. It catalyses the reaction a 1-acyl-sn-glycero-3-phosphocholine = a 1-acyl-sn-glycero-2,3-cyclic phosphate + choline. The enzyme catalyses a 1-acyl-sn-glycero-3-phosphoethanolamine = a 1-acyl-sn-glycero-2,3-cyclic phosphate + ethanolamine. Its function is as follows. Dermonecrotic toxins cleave the phosphodiester linkage between the phosphate and headgroup of certain phospholipids (sphingolipid and lysolipid substrates), forming an alcohol (often choline) and a cyclic phosphate. This toxin acts on sphingomyelin (SM). It may also act on ceramide phosphoethanolamine (CPE), lysophosphatidylcholine (LPC) and lysophosphatidylethanolamine (LPE), but not on lysophosphatidylserine (LPS), and lysophosphatidylglycerol (LPG). It acts by transphosphatidylation, releasing exclusively cyclic phosphate products as second products. Induces dermonecrosis, hemolysis, increased vascular permeability, edema, inflammatory response, and platelet aggregation. The protein is Dermonecrotic toxin LvSicTox-alphaII1 of Loxosceles variegata (Recluse spider).